Here is a 633-residue protein sequence, read N- to C-terminus: 1-deoxy-D-xylulose-5-phosphate synthase (633 aa).

Thiamine diphosphate contacts are provided by residues His-72 and 113-115; that span reads GHS. Residue Asp-144 participates in Mg(2+) binding. Thiamine diphosphate is bound by residues 145–146, Asn-173, Tyr-284, and Glu-367; that span reads GA. Residue Asn-173 coordinates Mg(2+).

The protein belongs to the transketolase family. DXPS subfamily. As to quaternary structure, homodimer. It depends on Mg(2+) as a cofactor. Thiamine diphosphate serves as cofactor.

It carries out the reaction D-glyceraldehyde 3-phosphate + pyruvate + H(+) = 1-deoxy-D-xylulose 5-phosphate + CO2. Its pathway is metabolic intermediate biosynthesis; 1-deoxy-D-xylulose 5-phosphate biosynthesis; 1-deoxy-D-xylulose 5-phosphate from D-glyceraldehyde 3-phosphate and pyruvate: step 1/1. Catalyzes the acyloin condensation reaction between C atoms 2 and 3 of pyruvate and glyceraldehyde 3-phosphate to yield 1-deoxy-D-xylulose-5-phosphate (DXP). In Bacillus velezensis (strain DSM 23117 / BGSC 10A6 / LMG 26770 / FZB42) (Bacillus amyloliquefaciens subsp. plantarum), this protein is 1-deoxy-D-xylulose-5-phosphate synthase.